The primary structure comprises 222 residues: Small ribosomal subunit protein uS7m (222 aa).

Residues 1 to 14 constitute a mitochondrion transit peptide; the sequence is MTTKLARFAQKRWI.

This sequence belongs to the universal ribosomal protein uS7 family. As to quaternary structure, component of the mitochondrial ribosome small subunit (28S) which comprises a 12S rRNA and about 30 distinct proteins.

The protein resides in the mitochondrion. The chain is Small ribosomal subunit protein uS7m (mrps-7) from Caenorhabditis elegans.